The following is a 320-amino-acid chain: Protein TsetseEP (320 aa).

A signal peptide spans 1-19; that stretch reads MKFFISFAFLCLVLSCVAA. The tract at residues 192–320 is disordered; that stretch reads GLPEPEPEPE…ESKPNSLFNF (129 aa). The span at 194–308 shows a compositional bias: acidic residues; sequence PEPEPEPEPE…EPEPEPEPQP (115 aa). Residues 194–311 are 59 X 2 AA tandem repeats of P-E; the sequence is PEPEPEPEPE…PEPEPQPEPE (118 aa).

As to expression, expressed in the gut, but not salivary glands, of female and male flies (at protein level). Present in vesicles in midgut cells and in the lumen of the gut.

It localises to the secreted. The sequence is that of Protein TsetseEP from Glossina morsitans morsitans (Savannah tsetse fly).